Consider the following 463-residue polypeptide: Elongation factor 1-alpha 1 (463 aa).

The region spanning 5–242 (KIHINIVVIG…DAILPPARPT (238 aa)) is the tr-type G domain. The G1 stretch occupies residues 14 to 21 (GHVDSGKS). 14-21 (GHVDSGKS) contributes to the GTP binding site. Positions 70–74 (GITID) are G2. The G3 stretch occupies residues 91–94 (DAPG). Residues 91-95 (DAPGH) and 153-156 (NKMD) each bind GTP. The interval 153-156 (NKMD) is G4. Residues 194 to 196 (SGW) are G5. A 5-glutamyl glycerylphosphorylethanolamine mark is found at Glu-301 and Glu-374.

Belongs to the TRAFAC class translation factor GTPase superfamily. Classic translation factor GTPase family. EF-Tu/EF-1A subfamily.

The protein localises to the cytoplasm. Functionally, this protein promotes the GTP-dependent binding of aminoacyl-tRNA to the A-site of ribosomes during protein biosynthesis. The polypeptide is Elongation factor 1-alpha 1 (Drosophila melanogaster (Fruit fly)).